Consider the following 575-residue polypeptide: 3-hydroxy-3-methylglutaryl-coenzyme A reductase 1 (575 aa).

Over residues 1–13 the composition is skewed to basic residues; that stretch reads MDTTGRLHHRKHA. The disordered stretch occupies residues 1 to 25; the sequence is MDTTGRLHHRKHATPVEDRSPTTPK. 2 consecutive transmembrane segments (helical) span residues 29-49 and 73-93; these read ALPLPLYLTNAVFFTLFFSVA and EIVAIVSLIASFIYLLGFFGI. Residues 97-160 form a linker region; that stretch reads QSFIARASHD…PLIAPLVSEE (64 aa). N-linked (GlcNAc...) asparagine glycosylation occurs at asparagine 132. The catalytic stretch occupies residues 161-575; that stretch reads DEMIVNSVVD…SSKDMSKAAS (415 aa). The active-site Charge relay system is glutamate 254. An N-linked (GlcNAc...) asparagine glycan is attached at asparagine 318. Residues lysine 386 and aspartate 462 each act as charge relay system in the active site. A helical membrane pass occupies residues 531–551; that stretch reads LLAAIVAGSVLAGELSLMSAI. Catalysis depends on histidine 560, which acts as the Proton donor. Asparagine 564 is a glycosylation site (N-linked (GlcNAc...) asparagine).

Belongs to the HMG-CoA reductase family.

It localises to the endoplasmic reticulum membrane. The protein resides in the mitochondrion membrane. The protein localises to the plastid membrane. The enzyme catalyses (R)-mevalonate + 2 NADP(+) + CoA = (3S)-3-hydroxy-3-methylglutaryl-CoA + 2 NADPH + 2 H(+). Its pathway is metabolic intermediate biosynthesis; (R)-mevalonate biosynthesis; (R)-mevalonate from acetyl-CoA: step 3/3. In terms of biological role, catalyzes the synthesis of mevalonate. The specific precursor of all isoprenoid compounds present in plants. The polypeptide is 3-hydroxy-3-methylglutaryl-coenzyme A reductase 1 (HMGR1) (Hevea brasiliensis (Para rubber tree)).